Reading from the N-terminus, the 360-residue chain is Mannose-1-phosphate guanylyltransferase catalytic subunit beta (360 aa).

Positions 2–222 (KALILVGGYG…QGFWMDIGQP (221 aa)) are substrate-binding domain. Residue D110 participates in GDP-alpha-D-mannose binding. D110 provides a ligand contact to Mg(2+). K162 is an active-site residue. D218 is a GDP-alpha-D-mannose binding site. D218 contributes to the Mg(2+) binding site. Residues 245 to 360 (RAGPGFLGNV…DSVPEPRIIM (116 aa)) form a hexapeptide repeat domain region.

Belongs to the transferase hexapeptide repeat family. As to quaternary structure, component of the GMPPA-GMPPB mannose-1-phosphate guanylyltransferase complex composed of 4 gmppa subunits and 8 gmppb subunits; the complex is organized into three layers, a central layer made up of 2 gmppa dimers sandwiched between two layers each made up of 2 gmppb dimers. Catalytic activity of gmppb is reduced when part of the complex and binding of GDP-alpha-D-Mannose by gmppa induces allosteric feedback inhibition of gmppb. The cofactor is Mg(2+).

The catalysed reaction is alpha-D-mannose 1-phosphate + GTP + H(+) = GDP-alpha-D-mannose + diphosphate. The protein operates within nucleotide-sugar biosynthesis; GDP-alpha-D-mannose biosynthesis; GDP-alpha-D-mannose from alpha-D-mannose 1-phosphate (GTP route): step 1/1. Enzyme activity is reduced by incorporation into the GMPPA-GMPPB mannose-1-phosphate guanylyltransferase complex. Allosterically inhibited, when part of the GMPPA-GMPPB complex, by GDP-alpha-D-mannose binding to GMPPA. Catalytic subunit of the GMPPA-GMPPB mannose-1-phosphate guanylyltransferase complex. Catalyzes the formation of GDP-mannose, an essential precursor of glycan moieties of glycoproteins and glycolipids. Can catalyze the reverse reaction in vitro. Together with GMPPA regulates GDP-alpha-D-mannose levels. The protein is Mannose-1-phosphate guanylyltransferase catalytic subunit beta (gmppb) of Danio rerio (Zebrafish).